The primary structure comprises 725 residues: Rab-like protein 6 (725 aa).

Met-1 is subject to N-acetylmethionine. The tract at residues 39–279 (GVQYNMKIVI…IFLEMMEARS (241 aa)) is small GTPase-like. Residues 50–57 (GDRNTGKT), 100–104 (DVVDK), and 177–179 (YRD) contribute to the GTP site. 2 disordered regions span residues 281–364 (GHAS…PAPA) and 378–725 (PAAE…YEEL). Composition is skewed to low complexity over residues 291–325 (QSPS…QLSL) and 343–353 (AMPSSVHSSAP). Residues 410–427 (GLDRSFLEDTSVPKDKKV) are compositionally biased toward basic and acidic residues. Phosphoserine is present on residues Ser-414, Ser-436, Ser-438, Ser-480, Ser-482, Ser-483, and Ser-502. Residues 499–514 (QQCSEPETKWSSTKVS) are compositionally biased toward polar residues. Over residues 537-549 (DSERPQEGKDKQV) the composition is skewed to basic and acidic residues. Over residues 569 to 578 (DDPDFESDES) the composition is skewed to acidic residues. Phosphoserine occurs at positions 575 and 594. A Phosphothreonine modification is found at Thr-597. Basic and acidic residues predominate over residues 632–649 (MGPKESSDEDRDSKLPSK). Phosphoserine is present on residues Ser-637, Ser-638, and Ser-644. The segment at 652–690 (KKKKKKSKEEEEKTTKKKSKHKKSKDKEEGKEDRKKKRK) is interaction with CDKN2A. Basic residues predominate over residues 666–675 (TKKKSKHKKS). Residues 707–725 (LGGGAPGSRHPGGGDYEEL) show a composition bias toward gly residues.

It belongs to the small GTPase superfamily. Rab family.

It is found in the nucleus. It localises to the cytoplasm. May enhance cellular proliferation. May reduce growth inhibitory activity of CDKN2A. The sequence is that of Rab-like protein 6 (Rabl6) from Mus musculus (Mouse).